Reading from the N-terminus, the 348-residue chain is Aspartate carbamoyltransferase catalytic subunit (348 aa).

Arg-57 and Thr-58 together coordinate carbamoyl phosphate. Lys-86 contacts L-aspartate. Positions 107, 135, and 138 each coordinate carbamoyl phosphate. L-aspartate-binding residues include Arg-172 and Arg-234. 2 residues coordinate carbamoyl phosphate: Leu-274 and Pro-275.

The protein belongs to the aspartate/ornithine carbamoyltransferase superfamily. ATCase family. As to quaternary structure, heterododecamer (2C3:3R2) of six catalytic PyrB chains organized as two trimers (C3), and six regulatory PyrI chains organized as three dimers (R2).

It catalyses the reaction carbamoyl phosphate + L-aspartate = N-carbamoyl-L-aspartate + phosphate + H(+). Its pathway is pyrimidine metabolism; UMP biosynthesis via de novo pathway; (S)-dihydroorotate from bicarbonate: step 2/3. Catalyzes the condensation of carbamoyl phosphate and aspartate to form carbamoyl aspartate and inorganic phosphate, the committed step in the de novo pyrimidine nucleotide biosynthesis pathway. This chain is Aspartate carbamoyltransferase catalytic subunit, found in Dichelobacter nodosus (strain VCS1703A).